Here is a 426-residue protein sequence, read N- to C-terminus: MLDLKRIRSNPEEIKKALAGRGEDFDVSVIDKVLQLDEERRNILVEVESLKNKRKQESAKIPQFKKEGKNVDDIMAEMKELAGKIKKLDERLSEIDGSIEYIMLRIPNIPNPNVPNGDSDEDNVEIRRWGEATTFEFEPKAHWDLGVNLDILDFERAGKVTGSRFTFYKGLGARLERAVINYYLDTHIDEHGYTEILPPYMVNRKSMTGTGQLPKFEEDAFRLEEQDYFLIPTAEVPVTNLYRDEILNGSDLPMKHVAYSACFRSEAGSAGRDTRGLVRQHQFNKVELVKFTKPEQSYEELEKLTKDAEDVLQGLGIPYRVVRICKGDLGFTAALKYDIEVWMPSYNRYVEISSCSNFEDFQSRRANIKYRENPKDKPNFVHTLNGSGVAVGRTVAAIIENFQQADGTIIIPEKLRPYMGGKDVIK.

233-235 (TAE) is a binding site for L-serine. An ATP-binding site is contributed by 264-266 (RSE). An L-serine-binding site is contributed by Glu287. ATP is bound at residue 351-354 (EISS). Ser387 contacts L-serine.

It belongs to the class-II aminoacyl-tRNA synthetase family. Type-1 seryl-tRNA synthetase subfamily. As to quaternary structure, homodimer. The tRNA molecule binds across the dimer.

The protein resides in the cytoplasm. The enzyme catalyses tRNA(Ser) + L-serine + ATP = L-seryl-tRNA(Ser) + AMP + diphosphate + H(+). It carries out the reaction tRNA(Sec) + L-serine + ATP = L-seryl-tRNA(Sec) + AMP + diphosphate + H(+). It functions in the pathway aminoacyl-tRNA biosynthesis; selenocysteinyl-tRNA(Sec) biosynthesis; L-seryl-tRNA(Sec) from L-serine and tRNA(Sec): step 1/1. Functionally, catalyzes the attachment of serine to tRNA(Ser). Is also able to aminoacylate tRNA(Sec) with serine, to form the misacylated tRNA L-seryl-tRNA(Sec), which will be further converted into selenocysteinyl-tRNA(Sec). This is Serine--tRNA ligase from Clostridium tetani (strain Massachusetts / E88).